A 119-amino-acid polypeptide reads, in one-letter code: Histone H1B, sperm (119 aa).

An H15 domain is found at 8-77 (THPPVATAVV…QNKGSFRVNK (70 aa)). A disordered region spans residues 76–119 (NKTALPKKKKAAKKPKAKKVKKPKSAAKKKTNRARAPKTKKNRN). Basic residues predominate over residues 80–119 (LPKKKKAAKKPKAKKVKKPKSAAKKKTNRARAPKTKKNRN).

This sequence belongs to the histone H1/H5 family.

It localises to the nucleus. The protein localises to the chromosome. Its function is as follows. Histones H1 are necessary for the condensation of nucleosome chains into higher-order structures. This Platynereis dumerilii (Dumeril's clam worm) protein is Histone H1B, sperm.